A 174-amino-acid polypeptide reads, in one-letter code: ATP-dependent protease subunit HslV (174 aa).

Thr-2 is an active-site residue. Residues Gly-157, Cys-160, and Thr-163 each coordinate Na(+).

It belongs to the peptidase T1B family. HslV subfamily. In terms of assembly, a double ring-shaped homohexamer of HslV is capped on each side by a ring-shaped HslU homohexamer. The assembly of the HslU/HslV complex is dependent on binding of ATP.

The protein localises to the cytoplasm. The enzyme catalyses ATP-dependent cleavage of peptide bonds with broad specificity.. With respect to regulation, allosterically activated by HslU binding. In terms of biological role, protease subunit of a proteasome-like degradation complex believed to be a general protein degrading machinery. This Shewanella loihica (strain ATCC BAA-1088 / PV-4) protein is ATP-dependent protease subunit HslV.